Consider the following 92-residue polypeptide: Small ribosomal subunit protein bS18 (92 aa).

Residues 1–27 (MTQQSNSADRKPRGKGPKRPRKPKVDP) are disordered. The segment covering 12 to 22 (PRGKGPKRPRK) has biased composition (basic residues).

It belongs to the bacterial ribosomal protein bS18 family. In terms of assembly, part of the 30S ribosomal subunit. Forms a tight heterodimer with protein bS6.

Its function is as follows. Binds as a heterodimer with protein bS6 to the central domain of the 16S rRNA, where it helps stabilize the platform of the 30S subunit. The polypeptide is Small ribosomal subunit protein bS18 (Deinococcus deserti (strain DSM 17065 / CIP 109153 / LMG 22923 / VCD115)).